The primary structure comprises 557 residues: Interferon alpha/beta receptor 1 (557 aa).

The signal sequence occupies residues 1–27; that stretch reads MMVVLLGATTLVLVAVAPWVLSAAAGG. Over 28 to 436 the chain is Extracellular; sequence KNLKSPQKVE…EKTKPGNTSK (409 aa). 4 consecutive Fibronectin type-III domains span residues 32–126, 127–227, 231–329, and 331–432; these read SPQK…FRKA, QIGP…TVEN, PPEN…TEIQ, and FLLP…TKPG. 6 N-linked (GlcNAc...) asparagine glycosylation sites follow: asparagine 50, asparagine 58, asparagine 81, asparagine 88, asparagine 110, and asparagine 172. A disulfide bridge connects residues cysteine 79 and cysteine 87. A disulfide bridge links cysteine 199 with cysteine 220. An N-linked (GlcNAc...) asparagine glycan is attached at asparagine 254. Cysteine 283 and cysteine 291 form a disulfide bridge. Asparagine 313, asparagine 314, asparagine 376, asparagine 416, and asparagine 433 each carry an N-linked (GlcNAc...) asparagine glycan. Cysteines 403 and 426 form a disulfide. The chain crosses the membrane as a helical span at residues 437–457; it reads IWLIVGICIALFALPFVIYAA. Residues 458–557 are Cytoplasmic-facing; that stretch reads KVFLRCINYV…TSEELQQDFV (100 aa). Cysteine 463 carries the S-palmitoyl cysteine lipid modification. A phosphotyrosine; by TYK2 mark is found at tyrosine 466 and tyrosine 481. The important for interaction with TYK2 stretch occupies residues 491 to 500; that stretch reads LLSTSEEQIE. A Phosphoserine modification is found at serine 495. Residues lysine 501, lysine 525, and lysine 526 each participate in a glycyl lysine isopeptide (Lys-Gly) (interchain with G-Cter in ubiquitin) cross-link. The interval 516–557 is disordered; sequence ETNQTDEDHKKYSSQTSQDSGNYSNEDESESKTSEELQQDFV. Residues 528-539 are compositionally biased toward polar residues; the sequence is SSQTSQDSGNYS. Serine 535 is modified (phosphoserine).

It belongs to the type II cytokine receptor family. As to quaternary structure, heterodimer with IFNAR2; forming the receptor for type I interferon. Interacts with TYK2. Interacts with STAT1 and STAT2; the interaction requires its phosphorylation at Tyr-466. Interacts (serine-phosphorylated form) with FBXW11, the substrate recognition component of a SCF (SKP1-CUL1-F-box protein) E3 ubiquitin-protein ligase complex. Interacts with SHMT2; this promotes interaction with ABRAXAS2 and the BRISC complex. Interacts with TRIM10; this interaction prevents association between IFNAR1 and TYK2. In terms of processing, ubiquitinated, leading to its internalization and degradation. Polyubiquitinated via 'Lys-48'-linked and 'Lys-63'-linked ubiquitin chains, leading to receptor internalization and lysosomal degradation. The 'Lys-63'-linked ubiquitin chains are cleaved off by the BRISC complex. Post-translationally, phosphorylated on tyrosine residues in response to interferon-binding: phosphorylation by TYK2 tyrosine kinase creates docking sites for STAT proteins. Phosphorylated on serine residues in response to interferon binding; this promotes interaction with FBXW11 and ubiquitination. Palmitoylation at Cys-463 is required for the activation of STAT1 and STAT2. As to expression, IFN receptors are present in all tissues and even on the surface of most IFN-resistant cells. Isoform 1, isoform 2 and isoform 3 are expressed in the IFN-alpha sensitive myeloma cell line U266B1. Isoform 2 and isoform 3 are expressed in the IFN-alpha resistant myeloma cell line U266R. Isoform 1 is not expressed in IFN-alpha resistant myeloma cell line U266R.

The protein resides in the cell membrane. Its subcellular location is the late endosome. It localises to the lysosome. Its function is as follows. Together with IFNAR2, forms the heterodimeric receptor for type I interferons (including interferons alpha, beta, epsilon, omega and kappa). Type I interferon binding activates the JAK-STAT signaling cascade, resulting in transcriptional activation or repression of interferon-regulated genes that encode the effectors of the interferon response. Mechanistically, type I interferon-binding brings the IFNAR1 and IFNAR2 subunits into close proximity with one another, driving their associated Janus kinases (JAKs) (TYK2 bound to IFNAR1 and JAK1 bound to IFNAR2) to cross-phosphorylate one another. The activated kinases phosphorylate specific tyrosine residues on the intracellular domains of IFNAR1 and IFNAR2, forming docking sites for the STAT transcription factors. STAT proteins are then phosphorylated by the JAKs, promoting their translocation into the nucleus to regulate expression of interferon-regulated genes. Can also act independently of IFNAR2: form an active IFNB1 receptor by itself and activate a signaling cascade that does not involve activation of the JAK-STAT pathway. This is Interferon alpha/beta receptor 1 (IFNAR1) from Homo sapiens (Human).